A 213-amino-acid chain; its full sequence is Protein Pars_0011 (213 aa).

The 194-residue stretch at 8–201 (EEGRYLVKLA…EREPNEEVYQ (194 aa)) folds into the AMMECR1 domain.

In Pyrobaculum arsenaticum (strain DSM 13514 / JCM 11321 / PZ6), this protein is Protein Pars_0011.